We begin with the raw amino-acid sequence, 104 residues long: MSEFTNVTIIREANVYFDGGVVSRTVVFPDGTKKTLGIMQPGEYTFTTGAPEIMEILSGELDLKLPGSDAWNRVGGGESFDVPANSSFTMKVLSLTDYCCSFLG.

This sequence belongs to the nucleoside phosphorylase PpnP family.

It catalyses the reaction a purine D-ribonucleoside + phosphate = a purine nucleobase + alpha-D-ribose 1-phosphate. The catalysed reaction is adenosine + phosphate = alpha-D-ribose 1-phosphate + adenine. The enzyme catalyses cytidine + phosphate = cytosine + alpha-D-ribose 1-phosphate. It carries out the reaction guanosine + phosphate = alpha-D-ribose 1-phosphate + guanine. It catalyses the reaction inosine + phosphate = alpha-D-ribose 1-phosphate + hypoxanthine. The catalysed reaction is thymidine + phosphate = 2-deoxy-alpha-D-ribose 1-phosphate + thymine. The enzyme catalyses uridine + phosphate = alpha-D-ribose 1-phosphate + uracil. It carries out the reaction xanthosine + phosphate = alpha-D-ribose 1-phosphate + xanthine. Its function is as follows. Catalyzes the phosphorolysis of diverse nucleosides, yielding D-ribose 1-phosphate and the respective free bases. Can use uridine, adenosine, guanosine, cytidine, thymidine, inosine and xanthosine as substrates. Also catalyzes the reverse reactions. This chain is Pyrimidine/purine nucleoside phosphorylase, found in Geobacter sulfurreducens (strain ATCC 51573 / DSM 12127 / PCA).